The following is a 69-amino-acid chain: DNA-directed RNA polymerase subunit omega (69 aa).

This sequence belongs to the RNA polymerase subunit omega family. The RNAP catalytic core consists of 2 alpha, 1 beta, 1 beta' and 1 omega subunit. When a sigma factor is associated with the core the holoenzyme is formed, which can initiate transcription.

It catalyses the reaction RNA(n) + a ribonucleoside 5'-triphosphate = RNA(n+1) + diphosphate. Promotes RNA polymerase assembly. Latches the N- and C-terminal regions of the beta' subunit thereby facilitating its interaction with the beta and alpha subunits. The sequence is that of DNA-directed RNA polymerase subunit omega from Pediococcus pentosaceus (strain ATCC 25745 / CCUG 21536 / LMG 10740 / 183-1w).